Here is a 95-residue protein sequence, read N- to C-terminus: Small ribosomal subunit protein bS20 (95 aa).

The protein belongs to the bacterial ribosomal protein bS20 family.

Its function is as follows. Binds directly to 16S ribosomal RNA. This chain is Small ribosomal subunit protein bS20, found in Ehrlichia canis (strain Jake).